The following is a 631-amino-acid chain: Quinoprotein alcohol dehydrogenase PedE (631 aa).

An N-terminal signal peptide occupies residues 1-33 (MTIRSLPALSPLALSVRVLLMAGSLALGNVATA). Ca(2+) is bound by residues Asp-53, Thr-56, and Asp-59. Glu-103 serves as a coordination point for pyrroloquinoline quinone. Cysteines 147 and 148 form a disulfide. Pyrroloquinoline quinone contacts are provided by residues Arg-153, Thr-197, and 215-217 (HGS). Ca(2+) is bound at residue Glu-221. Residues 250–286 (GRLNGKDSTPTGDVKAPSWPDDPTTETGKVEAWSHGG) form a disordered region. Ca(2+) is bound by residues Asn-308 and Asp-358. Residue Asp-358 is the Proton acceptor of the active site. Arg-386 lines the pyrroloquinoline quinone pocket. The disordered stretch occupies residues 421 to 443 (GRPVENPGQRPAKPLPGETKGKP). Residues Trp-531 and Ala-595 each coordinate pyrroloquinoline quinone.

Belongs to the bacterial PQQ dehydrogenase family. Homodimer. Interacts with cytochrome c550. The cofactor is pyrroloquinoline quinone. It depends on Ca(2+) as a cofactor. In terms of processing, the disulfide ring formed between the two adjacent cysteine residues Cys-147 and Cys-148 is essential for efficient electron transfer at pH 7 from PedE to its natural electron acceptor cytochrome c550.

It localises to the periplasm. It carries out the reaction a primary alcohol + 2 Fe(III)-[cytochrome c] = an aldehyde + 2 Fe(II)-[cytochrome c] + 2 H(+). It catalyses the reaction ethanol + 2 Fe(III)-[cytochrome c] = acetaldehyde + 2 Fe(II)-[cytochrome c] + 2 H(+). The catalysed reaction is butan-1-ol + 2 Fe(III)-[cytochrome c] = butanal + 2 Fe(II)-[cytochrome c] + 2 H(+). The enzyme catalyses butan-2-ol + 2 Fe(III)-[cytochrome c] = butan-2-one + 2 Fe(II)-[cytochrome c] + 2 H(+). It carries out the reaction 2-phenylethanol + 2 Fe(III)-[cytochrome c] = 2-phenylacetaldehyde + 2 Fe(II)-[cytochrome c] + 2 H(+). It catalyses the reaction octan-1-ol + 2 Fe(III)-[cytochrome c] = octanal + 2 Fe(II)-[cytochrome c] + 2 H(+). The catalysed reaction is hexan-1-ol + 2 Fe(III)-[cytochrome c] = hexanal + 2 Fe(II)-[cytochrome c] + 2 H(+). The enzyme catalyses cinnamyl alcohol + 2 Fe(III)-[cytochrome c] = cinnamaldehyde + 2 Fe(II)-[cytochrome c] + 2 H(+). It carries out the reaction farnesol + 2 Fe(III)-[cytochrome c] = farnesal + 2 Fe(II)-[cytochrome c] + 2 H(+). It catalyses the reaction an aldehyde + 2 Fe(III)-[cytochrome c] + H2O = a carboxylate + 2 Fe(II)-[cytochrome c] + 3 H(+). The catalysed reaction is acetaldehyde + 2 Fe(III)-[cytochrome c] + H2O = 2 Fe(II)-[cytochrome c] + acetate + 3 H(+). The enzyme catalyses butanal + 2 Fe(III)-[cytochrome c] + H2O = butanoate + 2 Fe(II)-[cytochrome c] + 3 H(+). It carries out the reaction hexanal + 2 Fe(III)-[cytochrome c] + H2O = hexanoate + 2 Fe(II)-[cytochrome c] + 3 H(+). It catalyses the reaction octanal + 2 Fe(III)-[cytochrome c] + H2O = octanoate + 2 Fe(II)-[cytochrome c] + 3 H(+). Its function is as follows. Alcohol dehydrogenase that catalyzes the oxidation of a range of substrates, including linear and aromatic primary and secondary alcohols, as well as aldehydes, allowing bacterial growth with a variety of volatile organic compounds (VOCs) as carbon and energy sources. Uses a specific inducible cytochrome c550, encoded by the adjacent gene in the locus, as electron acceptor. The sequence is that of Quinoprotein alcohol dehydrogenase PedE from Pseudomonas putida (strain ATCC 47054 / DSM 6125 / CFBP 8728 / NCIMB 11950 / KT2440).